A 1137-amino-acid polypeptide reads, in one-letter code: Guanine nucleotide exchange factor DBS (1137 aa).

The CRAL-TRIO domain occupies T52–H224. The stretch at L351–K456 is one Spectrin repeat. 2 positions are modified to phosphoserine: S457 and S480. The stretch at L503 to L529 forms a coiled coil. The segment at L557–E625 is disordered. Residues G584 to G597 are compositionally biased toward low complexity. Basic and acidic residues predominate over residues A607 to Q616. S620 carries the phosphoserine modification. Residues L631–S811 enclose the DH domain. The 117-residue stretch at K829–T945 folds into the PH domain. 2 disordered regions span residues S955–G1058 and G1116–P1137. The span at Q962–S977 shows a compositional bias: low complexity. 4 positions are modified to phosphoserine: S1033, S1034, S1041, and S1042. An SH3 domain is found at L1055–G1116. The segment covering G1119–G1128 has biased composition (polar residues).

The protein belongs to the MCF2 family. In terms of assembly, interacts with GTP-bound RAC1. Interacts with CDC42. Interacts with RHOA. Interacts with CCPG1, which results in specific inhibition of its exchange activity toward RHOA, but does not affect its activity on CDC42.

It is found in the cytoplasm. The protein resides in the cell membrane. Its subcellular location is the endomembrane system. Functionally, guanine nucleotide exchange factor that catalyzes guanine nucleotide exchange on RHOA and CDC42, and thereby contributes to the regulation of RHOA and CDC42 signaling pathways. Seems to lack activity with RAC1. Becomes activated and highly tumorigenic by truncation of the N-terminus. Isoform 5 activates CDC42. Does not catalyze guanine nucleotide exchange on CDC42. The chain is Guanine nucleotide exchange factor DBS (MCF2L) from Homo sapiens (Human).